Consider the following 375-residue polypeptide: Actin, cytoplasmic (375 aa).

Belongs to the actin family.

The protein localises to the cytoplasm. The protein resides in the cytoskeleton. The enzyme catalyses ATP + H2O = ADP + phosphate + H(+). In terms of biological role, actins are highly conserved proteins that are involved in various types of cell motility and are ubiquitously expressed in all eukaryotic cells. The chain is Actin, cytoplasmic (MIC-ACT-1) from Sterkiella nova (Ciliate).